A 424-amino-acid chain; its full sequence is Dihydrolipoyllysine-residue succinyltransferase component of 2-oxoglutarate dehydrogenase complex (424 aa).

In terms of domain architecture, Lipoyl-binding spans 1–76 (MPEVKVPELA…EVGQAIAVVG (76 aa)). K42 is subject to N6-lipoyllysine. Disordered regions lie at residues 76–138 (GEGS…KYAR) and 155–204 (VRKE…RKKT). The segment covering 91–105 (EAPKQETETSTDDKS) has biased composition (basic and acidic residues). A compositionally biased stretch (polar residues) spans 122–131 (DNNQRVNATP). Residues 128 to 164 (NATPSARKYAREKGIDLSEIAAASNDVVRKEHVDQSQ) form the Peripheral subunit-binding (PSBD) domain. The segment covering 162–176 (QSQTQTSTQQQAQPA) has biased composition (low complexity). Active-site residues include H395 and D399.

Belongs to the 2-oxoacid dehydrogenase family. As to quaternary structure, forms a 24-polypeptide structural core with octahedral symmetry. Part of the 2-oxoglutarate dehydrogenase (OGDH) complex composed of E1 (2-oxoglutarate dehydrogenase), E2 (dihydrolipoamide succinyltransferase) and E3 (dihydrolipoamide dehydrogenase); the complex contains multiple copies of the three enzymatic components (E1, E2 and E3). Requires (R)-lipoate as cofactor.

The enzyme catalyses N(6)-[(R)-dihydrolipoyl]-L-lysyl-[protein] + succinyl-CoA = N(6)-[(R)-S(8)-succinyldihydrolipoyl]-L-lysyl-[protein] + CoA. It functions in the pathway amino-acid degradation; L-lysine degradation via saccharopine pathway; glutaryl-CoA from L-lysine: step 6/6. In terms of biological role, E2 component of the 2-oxoglutarate dehydrogenase (OGDH) complex which catalyzes the second step in the conversion of 2-oxoglutarate to succinyl-CoA and CO(2). This is Dihydrolipoyllysine-residue succinyltransferase component of 2-oxoglutarate dehydrogenase complex (odhB) from Staphylococcus saprophyticus subsp. saprophyticus (strain ATCC 15305 / DSM 20229 / NCIMB 8711 / NCTC 7292 / S-41).